The primary structure comprises 134 residues: Small ribosomal subunit protein uS11 (134 aa).

This sequence belongs to the universal ribosomal protein uS11 family. As to quaternary structure, part of the 30S ribosomal subunit. Interacts with proteins S7 and S18. Binds to IF-3.

Its function is as follows. Located on the platform of the 30S subunit, it bridges several disparate RNA helices of the 16S rRNA. Forms part of the Shine-Dalgarno cleft in the 70S ribosome. This is Small ribosomal subunit protein uS11 from Corynebacterium glutamicum (strain R).